Reading from the N-terminus, the 499-residue chain is ADP,ATP carrier protein 5 (499 aa).

A run of 11 helical transmembrane segments spans residues Leu25–Leu45, Ile61–Tyr81, Ile93–Tyr113, Tyr148–Trp168, Phe183–Met203, Ile223–Leu243, Leu286–Val306, Leu327–Met347, Ala356–Phe376, Ile380–Gly400, and Leu468–Val488.

This sequence belongs to the ADP/ATP translocase tlc family.

The protein resides in the cell membrane. In terms of biological role, provides the rickettsial cell with host ATP in exchange for rickettsial ADP. This is an obligate exchange system. This energy acquiring activity is an important component of rickettsial parasitism. In Rickettsia conorii (strain ATCC VR-613 / Malish 7), this protein is ADP,ATP carrier protein 5 (tlcE).